The following is a 1105-amino-acid chain: MEESGQLSDFKLPEGIKDPSLEFDLIECLGRGSFGSVYKATYKKTGNIVAVKLVPINEDFQEILKEINIMKQCKSKYVVQYYGNYFKDETCWIIMEYCAFGSVSDMMNITNRVLNEEQIALVCYSTLKGLYYLHRNSKIHRDIKPGNILVSEEGECKLADFGVSGQLSERTRKRNTVIGTPFFLAPEVIQEVGYDNKADIWALGISAIEMAEFHPPYHDLHPMRVLFMIPTSTSPTLKEPHKWSPEFSDFIALCLAKEQSQRPSAKDLLKHSFFEKKLKGSYVMKSLSETAQMVIERCGGREEAVKAAAERKSKQSGVSVDFIHCESVDEPDSSDEEDLLERNNKRLSTQIQQKKEQQAQQQQQQAQQQQQQQQQQQQQYQPPSPNNNNRTTTKNNDINELDSLLNNMMMSSSASASTSPSPSSISSNGNKSGTTTNDYHTGNGRTSSSSPQFGLQHQNSSNSFPSSPNTVPSVESKPRQPASELDDLLEEMMNPSFGNRARNSSGGGGGLTPIGSPITKRPTPTMQSSTTTTTSSSSLPLPMSPSVYLSPTRVSGIWSGESAGGCANTTLWRKNPQYLLQITATTTIRITLRQTGDKLVHIGFYFARSNTGANDQFRRRITLTKEYLVPGLDITFLKSTEVSAKITMEPGYYVIIPATFEPNQEGSFELDVTATSDNIGGQYNSNNNIKLSEIKGDRDWRIISDRFEWRGSSAGGSFSGSSATWKDNPKFFFETTQTSNTTIVLGKLSDIPKETYIGFYIFKADKNCPFISLTANNLYSKTSFVNGIEVVHTQQQMPPGCYIIVPCTYDSRQEGSFTLTCYSDCQQGSIYKLDLSEQILTVHGEWRGATSGGCLNHTTWRNNAQYLIHNTSSSPTKVTIMLEQLEKMDNQQLPFVGFYVAKSPTPNLDKKLFSLTPKDIVGNTEFINDYQVHFTSIMEPNTSYIIIPSTFTPGIEYPFNLRVITNQHNVIQISRLPEWSTRKLSGEWRGQSCGGRYSNTSSSWTLNPRFRFNLPRGGRFTIILAQAEKPSYNGIGFYYFKTLQDGTLREFVCKSGFICGKEIVLESSINEGVTGVVIPSTFEPNIQDSFNLTIYSEFDLDFYNN.

Residues 23 to 274 (FDLIECLGRG…AKDLLKHSFF (252 aa)) enclose the Protein kinase domain. ATP-binding positions include 29–37 (LGRGSFGSV) and Lys-52. The Proton acceptor role is filled by Asp-142. Disordered regions lie at residues 348-396 (STQI…TKNN), 411-482 (SSSA…RQPA), and 495-541 (PSFG…SLPL). Low complexity-rich tracts occupy residues 358-396 (QAQQQQQQAQQQQQQQQQQQQQYQPPSPNNNNRTTTKNN) and 411-437 (SSSASASTSPSPSSISSNGNKSGTTTN). The span at 438–458 (DYHTGNGRTSSSSPQFGLQHQ) shows a compositional bias: polar residues. 2 stretches are compositionally biased toward low complexity: residues 459–473 (NSSNSFPSSPNTVPS) and 513–541 (PIGSPITKRPTPTMQSSTTTTTSSSSLPL). The interval 516–1105 (SPITKRPTPT…SEFDLDFYNN (590 aa)) is calpain-like cysteine protease-like. Domain III regions lie at residues 641–668 (EVSAKITMEPGYYVIIPATFEPNQEGSF), 791–830 (VHTQQQMPPGCYIIVPCTYDSRQEGSFTLTCYSDCQQGSI), 836–972 (SEQI…NVIQ), and 1076–1103 (VVIPSTFEPNIQDSFNLTIYSEFDLDFY).

In the N-terminal section; belongs to the protein kinase superfamily. STE Ser/Thr protein kinase family. STE20 subfamily. This sequence in the C-terminal section; belongs to the peptidase C2 family. Mn(2+) serves as cofactor.

The catalysed reaction is L-seryl-[protein] + ATP = O-phospho-L-seryl-[protein] + ADP + H(+). It catalyses the reaction L-threonyl-[protein] + ATP = O-phospho-L-threonyl-[protein] + ADP + H(+). Its function is as follows. Probable serine/threonine-protein kinase. This Dictyostelium discoideum (Social amoeba) protein is Serine/threonine-protein kinase 4 homolog B (krsB).